The chain runs to 278 residues: Secoisolariciresinol dehydrogenase (278 aa).

NAD(+) contacts are provided by residues Gly23–Ile28, Asp47, Val73, and Asn99. Residues Ser104 and Ser164 each contribute to the substrate site. Tyr167 acts as the Proton donor/acceptor in catalysis. NAD(+) contacts are provided by Lys171 and Val200.

This sequence belongs to the short-chain dehydrogenases/reductases (SDR) family. As to quaternary structure, homotetramer.

The enzyme catalyses (-)-secoisolariciresinol + 2 NAD(+) = (-)-matairesinol + 2 NADH + 2 H(+). Functionally, oxidoreductase involved in lignan biosynthesis. Catalyzes the stereospecific conversion of (-)-secoisolariciresinol to (-)-matairesinol via a lactol intermediate. The chain is Secoisolariciresinol dehydrogenase from Podophyllum peltatum (American mandrake).